The sequence spans 228 residues: PKHD-type hydroxylase xcc-b100_1388 (228 aa).

A Fe2OG dioxygenase domain is found at 78–180; it reads RIYPPLFNRY…RVASFFWIQS (103 aa). Fe cation-binding residues include histidine 96, aspartate 98, and histidine 161. A 2-oxoglutarate-binding site is contributed by arginine 171.

Fe(2+) serves as cofactor. Requires L-ascorbate as cofactor.

This is PKHD-type hydroxylase xcc-b100_1388 from Xanthomonas campestris pv. campestris (strain B100).